An 82-amino-acid polypeptide reads, in one-letter code: Protein Vpu (82 aa).

The Extracellular portion of the chain corresponds to 1–7 (MQPLQIS). A helical transmembrane segment spans residues 8-28 (AIVALVVAAIIAIVVWSIALL). At 29-82 (EYRKLLRQRKIDRLIDRIRERAEDSGNESEGDQEELSALVEMGGHDAPWDIDDL) the chain is on the cytoplasmic side. 2 positions are modified to phosphoserine; by host CK2: serine 53 and serine 57.

This sequence belongs to the HIV-1 VPU protein family. Homopentamer. Interacts with host CD4 and BRTC; these interactions induce proteasomal degradation of CD4. Interacts with host BST2; this interaction leads to the degradation of host BST2. Interacts with host FBXW11. Interacts with host AP1M1; this interaction plays a role in the mistrafficking and subsequent degradation of host BST2. Interacts with host RANBP2; this interaction allows Vpu to down-regulate host BLM sumoylation. Post-translationally, phosphorylated by host CK2. This phosphorylation is necessary for interaction with human BTRC and degradation of CD4.

The protein resides in the host membrane. With respect to regulation, ion channel activity is inhibited by hexamethylene amiloride in vitro. Its function is as follows. Enhances virion budding by targeting host CD4 and Tetherin/BST2 to proteasome degradation. Degradation of CD4 prevents any unwanted premature interactions between viral Env and its host receptor CD4 in the endoplasmic reticulum. Degradation of antiretroviral protein Tetherin/BST2 is important for virion budding, as BST2 tethers new viral particles to the host cell membrane. Mechanistically, Vpu bridges either CD4 or BST2 to BTRC, a substrate recognition subunit of the Skp1/Cullin/F-box protein E3 ubiquitin ligase, induces their ubiquitination and subsequent proteasomal degradation. The alteration of the E3 ligase specificity by Vpu seems to promote the degradation of host IKBKB, leading to NF-kappa-B down-regulation and subsequent apoptosis. Acts as a viroporin that forms an oligomeric ion channel in membranes. Modulates the host DNA repair mechanisms to promote degradation of nuclear viral cDNA in cells that are already productively infected in order to suppress immune sensing and proviral hyper-integration (superinfection). Manipulates PML-NBs and modulates SUMOylation of host BLM protein thereby enhancing its DNA-end processing activity toward viral unintegrated linear DNA. Also inhibits RAD52-mediated homologous repair of viral cDNA, preventing the generation of dead-end circular forms of single copies of the long terminal repeat and permitting sustained nucleolytic attack. The sequence is that of Protein Vpu from Homo sapiens (Human).